We begin with the raw amino-acid sequence, 286 residues long: Pyridoxal kinase PdxY (286 aa).

Residues S9 and 44 to 45 (TQ) contribute to the substrate site. Residues D111, E148, and K181 each coordinate ATP. Position 222 (D222) interacts with substrate.

The protein belongs to the pyridoxine kinase family. PdxY subfamily. In terms of assembly, homodimer. The cofactor is Mg(2+).

The catalysed reaction is pyridoxal + ATP = pyridoxal 5'-phosphate + ADP + H(+). It participates in cofactor metabolism; pyridoxal 5'-phosphate salvage; pyridoxal 5'-phosphate from pyridoxal: step 1/1. Pyridoxal kinase involved in the salvage pathway of pyridoxal 5'-phosphate (PLP). Catalyzes the phosphorylation of pyridoxal to PLP. The protein is Pyridoxal kinase PdxY of Actinobacillus succinogenes (strain ATCC 55618 / DSM 22257 / CCUG 43843 / 130Z).